The primary structure comprises 310 residues: Glutaminase 1 (310 aa).

Substrate-binding residues include Ser66, Asn117, Glu161, Asn168, Tyr192, Tyr244, and Val262. Lys294 is subject to N6-acetyllysine.

The protein belongs to the glutaminase family. In terms of assembly, homotetramer.

The enzyme catalyses L-glutamine + H2O = L-glutamate + NH4(+). The polypeptide is Glutaminase 1 (Shigella flexneri).